A 1752-amino-acid polypeptide reads, in one-letter code: Serine protease/ABC transporter B family protein tagA (1752 aa).

Positions Met-1–Ser-24 are cleaved as a signal peptide. An N-linked (GlcNAc...) asparagine glycan is attached at Asn-20. The Peptidase S8 domain occupies His-280 to Ile-696. Active-site charge relay system residues include Asp-312 and His-352. Asn-400 and Asn-557 each carry an N-linked (GlcNAc...) asparagine glycan. The Charge relay system role is filled by Ser-625. N-linked (GlcNAc...) asparagine glycans are attached at residues Asn-653, Asn-785, and Asn-823. The helical transmembrane segment at Ile-909–Cys-929 threads the bilayer. The segment at Asp-946 to Asp-1032 is disordered. The span at Asn-962 to Asn-994 shows a compositional bias: low complexity. Residue Asn-993 is glycosylated (N-linked (GlcNAc...) asparagine). Positions Ser-995–Leu-1004 are enriched in polar residues. Low complexity predominate over residues Gly-1013 to Gln-1028. The next 6 helical transmembrane spans lie at Ile-1058–Leu-1078, Phe-1102–Leu-1122, Ile-1174–Ile-1194, Leu-1200–Ile-1220, Thr-1285–Val-1305, and Leu-1315–Leu-1335. Positions Leu-1059–Ser-1341 constitute an ABC transmembrane type-1 domain. One can recognise an ABC transporter domain in the interval Ile-1374 to Ile-1610. Gly-1409–Ser-1416 is a binding site for ATP. The disordered stretch occupies residues Ile-1621 to Gln-1686. The span at Arg-1631–Thr-1642 shows a compositional bias: basic and acidic residues. N-linked (GlcNAc...) asparagine glycans are attached at residues Asn-1638, Asn-1670, and Asn-1694.

It in the C-terminal section; belongs to the ABC transporter superfamily. ABCB family. Multidrug resistance exporter (TC 3.A.1.201) subfamily. In the N-terminal section; belongs to the peptidase S8 family.

Its subcellular location is the membrane. Functionally, required for a general cell fate determination at the onset of development. Required for the specification of an initial population of prespore cells in which tagA is expressed. Required for normal SDF-2 signaling during spore encapsulation. The polypeptide is Serine protease/ABC transporter B family protein tagA (tagA) (Dictyostelium discoideum (Social amoeba)).